A 397-amino-acid chain; its full sequence is Acetate kinase (397 aa).

Asn-8 is a Mg(2+) binding site. Lys-15 is a binding site for ATP. Arg-89 is a binding site for substrate. The active-site Proton donor/acceptor is Asp-146. Residues 206-210, 281-283, and 329-333 each bind ATP; these read HLGNG, DLR, and GVGEN. Mg(2+) is bound at residue Glu-382.

Belongs to the acetokinase family. As to quaternary structure, homodimer. Mg(2+) is required as a cofactor. The cofactor is Mn(2+).

The protein localises to the cytoplasm. The enzyme catalyses acetate + ATP = acetyl phosphate + ADP. It functions in the pathway metabolic intermediate biosynthesis; acetyl-CoA biosynthesis; acetyl-CoA from acetate: step 1/2. In terms of biological role, catalyzes the formation of acetyl phosphate from acetate and ATP. Can also catalyze the reverse reaction. This is Acetate kinase from Bacillus cereus (strain ATCC 14579 / DSM 31 / CCUG 7414 / JCM 2152 / NBRC 15305 / NCIMB 9373 / NCTC 2599 / NRRL B-3711).